Reading from the N-terminus, the 231-residue chain is Enolase-phosphatase E1 (231 aa).

This sequence belongs to the HAD-like hydrolase superfamily. MasA/MtnC family. In terms of assembly, monomer. Mg(2+) serves as cofactor.

The catalysed reaction is 5-methylsulfanyl-2,3-dioxopentyl phosphate + H2O = 1,2-dihydroxy-5-(methylsulfanyl)pent-1-en-3-one + phosphate. It functions in the pathway amino-acid biosynthesis; L-methionine biosynthesis via salvage pathway; L-methionine from S-methyl-5-thio-alpha-D-ribose 1-phosphate: step 3/6. It participates in amino-acid biosynthesis; L-methionine biosynthesis via salvage pathway; L-methionine from S-methyl-5-thio-alpha-D-ribose 1-phosphate: step 4/6. In terms of biological role, bifunctional enzyme that catalyzes the enolization of 2,3-diketo-5-methylthiopentyl-1-phosphate (DK-MTP-1-P) into the intermediate 2-hydroxy-3-keto-5-methylthiopentenyl-1-phosphate (HK-MTPenyl-1-P), which is then dephosphorylated to form the acireductone 1,2-dihydroxy-3-keto-5-methylthiopentene (DHK-MTPene). The protein is Enolase-phosphatase E1 of Stenotrophomonas maltophilia (strain R551-3).